The sequence spans 221 residues: Histidine biosynthesis bifunctional protein HisIE (221 aa).

Residues 1 to 121 (MNITKIDWQK…KKQQFANWAW (121 aa)) form a phosphoribosyl-AMP cyclohydrolase region. Residues 122 to 221 (FIKLEQHLKE…IGLHPEGGNK (100 aa)) form a phosphoribosyl-ATP pyrophosphohydrolase region.

The protein in the N-terminal section; belongs to the PRA-CH family. In the C-terminal section; belongs to the PRA-PH family.

The protein resides in the cytoplasm. It catalyses the reaction 1-(5-phospho-beta-D-ribosyl)-ATP + H2O = 1-(5-phospho-beta-D-ribosyl)-5'-AMP + diphosphate + H(+). The enzyme catalyses 1-(5-phospho-beta-D-ribosyl)-5'-AMP + H2O = 1-(5-phospho-beta-D-ribosyl)-5-[(5-phospho-beta-D-ribosylamino)methylideneamino]imidazole-4-carboxamide. The protein operates within amino-acid biosynthesis; L-histidine biosynthesis; L-histidine from 5-phospho-alpha-D-ribose 1-diphosphate: step 2/9. It functions in the pathway amino-acid biosynthesis; L-histidine biosynthesis; L-histidine from 5-phospho-alpha-D-ribose 1-diphosphate: step 3/9. This Haemophilus influenzae (strain ATCC 51907 / DSM 11121 / KW20 / Rd) protein is Histidine biosynthesis bifunctional protein HisIE (hisI).